A 74-amino-acid chain; its full sequence is Putative membrane protein insertion efficiency factor (74 aa).

This sequence belongs to the UPF0161 family.

The protein localises to the cell inner membrane. Its function is as follows. Could be involved in insertion of integral membrane proteins into the membrane. The sequence is that of Putative membrane protein insertion efficiency factor from Endomicrobium trichonymphae.